A 228-amino-acid chain; its full sequence is NAD(P)H-hydrate epimerase (228 aa).

The YjeF N-terminal domain occupies Val-9 to Ala-209. Asn-53 to Asp-57 provides a ligand contact to (6S)-NADPHX. K(+) contacts are provided by Asn-54 and Asp-115. Residues Gly-119–Pro-125 and Asp-148 each bind (6S)-NADPHX. Ser-151 is a binding site for K(+).

This sequence belongs to the NnrE/AIBP family. K(+) serves as cofactor.

It carries out the reaction (6R)-NADHX = (6S)-NADHX. It catalyses the reaction (6R)-NADPHX = (6S)-NADPHX. Functionally, catalyzes the epimerization of the S- and R-forms of NAD(P)HX, a damaged form of NAD(P)H that is a result of enzymatic or heat-dependent hydration. This is a prerequisite for the S-specific NAD(P)H-hydrate dehydratase to allow the repair of both epimers of NAD(P)HX. This Bordetella bronchiseptica (strain ATCC BAA-588 / NCTC 13252 / RB50) (Alcaligenes bronchisepticus) protein is NAD(P)H-hydrate epimerase.